A 664-amino-acid chain; its full sequence is Translation factor guf1, mitochondrial (664 aa).

Residues 1-43 constitute a mitochondrion transit peptide; the sequence is MRGCLQLARWLSAGPKCPAASLPKAPSGLYNTIRSFTSSAQLA. Positions 66–246 constitute a tr-type G domain; the sequence is DRYRNFCIVA…TVVEKIPAPV (181 aa). GTP is bound by residues 75–82, 139–143, and 193–196; these read AHVDHGKS, DTPGH, and NKVD.

The protein belongs to the TRAFAC class translation factor GTPase superfamily. Classic translation factor GTPase family. LepA subfamily.

It localises to the mitochondrion inner membrane. The catalysed reaction is GTP + H2O = GDP + phosphate + H(+). Functionally, promotes mitochondrial protein synthesis. May act as a fidelity factor of the translation reaction, by catalyzing a one-codon backward translocation of tRNAs on improperly translocated ribosomes. Binds to mitochondrial ribosomes in a GTP-dependent manner. The polypeptide is Translation factor guf1, mitochondrial (guf1) (Aspergillus oryzae (strain ATCC 42149 / RIB 40) (Yellow koji mold)).